Consider the following 468-residue polypeptide: POC1 centriolar protein homolog B (468 aa).

WD repeat units follow at residues 16–55 (GHKD…RAYK), 58–97 (GHKE…ESTV), 100–139 (AHTA…FLFS), 142–181 (QHTN…CINT), 184–223 (DYKG…LLQH), 226–265 (VHNA…LIYT), and 268–307 (GHQG…YSVK). Residues 420 to 459 (NTLEQIVDQLNVLTQTVSILEHRLTLTEDKLKECLENQQK) are a coiled coil.

The protein belongs to the WD repeat POC1 family. In terms of assembly, interacts with pat. Highly expressed in ovary and, at low levels, in testis.

It localises to the cytoplasm. Its subcellular location is the cytoskeleton. The protein resides in the microtubule organizing center. It is found in the centrosome. The protein localises to the centriole. Its function is as follows. Plays an important role in centriole assembly and/or stability and ciliogenesis. Involved in early steps of centriole duplication, as well as in the later steps of centriole length control. This Xenopus laevis (African clawed frog) protein is POC1 centriolar protein homolog B (poc1b).